Reading from the N-terminus, the 545-residue chain is Metal transporter NRAT1 (545 aa).

12 helical membrane-spanning segments follow: residues 51–71 (FLAHVGPGALVAIGFLDPSNL), 84–104 (ELLWVILVGMVFALLIQTLAA), 128–148 (IFLWIIAELAVISDDIPEVLG), 155–175 (ILLKIPVWAGVILTVFSTLLL), 188–208 (FIIAAFMFTMAACFFGELSYL), 234–254 (IALFGAIITPYNLFLHSALVL), 278–298 (LAFIVAFLINVSVVVVAGSIC), 333–353 (VVYAVALLASGQSTTISCTFA), 373–395 (LITRVIAIAPSLIVSIVSGPSGA), 398–418 (LIILSSMILSFELPFALIPLL), 437–457 (VVIAWILSFALIVVNTYFLVW), and 474–494 (GLISVVVFALMAAYLVAVVYL). The tract at residues 516–545 (EAGGTPVVDASAADEDQPAPYRKDLADASM) is disordered. Residues 536 to 545 (YRKDLADASM) are compositionally biased toward basic and acidic residues.

This sequence belongs to the NRAMP (TC 2.A.55) family. As to expression, expressed at low levels in roots.

The protein resides in the cell membrane. Metal transporter that transports the trivalent cation aluminum (Al(3+)), but does not seem to transport divalent cations such as iron (Fe(2+)), manganese (Mg(2+)) or Cadmium (Cd(2+)). Involved in Al tolerance by taking up Al in root cells, where it is detoxified by chelation with organic acid anions and sequestration into the vacuoles. The sequence is that of Metal transporter NRAT1 (NRAT1) from Oryza sativa subsp. japonica (Rice).